Consider the following 147-residue polypeptide: 6-pyruvoyl tetrahydrobiopterin synthase (147 aa).

Position 26 (His-26) interacts with Zn(2+). Cys-45 (proton acceptor) is an active-site residue. His-51 and His-53 together coordinate Zn(2+). Catalysis depends on charge relay system residues His-92 and Glu-136.

This sequence belongs to the PTPS family. Homohexamer formed of two homotrimers in a head to head fashion. Zn(2+) serves as cofactor.

The enzyme catalyses 7,8-dihydroneopterin 3'-triphosphate = 6-pyruvoyl-5,6,7,8-tetrahydropterin + triphosphate + H(+). It functions in the pathway cofactor biosynthesis; tetrahydrobiopterin biosynthesis; tetrahydrobiopterin from 7,8-dihydroneopterin triphosphate: step 1/3. Its function is as follows. Involved in the biosynthesis of tetrahydrobiopterin, an essential cofactor of aromatic amino acid hydroxylases. Catalyzes the transformation of 7,8-dihydroneopterin triphosphate into 6-pyruvoyl tetrahydropterin. This is 6-pyruvoyl tetrahydrobiopterin synthase (pts) from Poecilia reticulata (Guppy).